The chain runs to 119 residues: Ribonuclease P protein component (119 aa).

Belongs to the RnpA family. As to quaternary structure, consists of a catalytic RNA component (M1 or rnpB) and a protein subunit.

It catalyses the reaction Endonucleolytic cleavage of RNA, removing 5'-extranucleotides from tRNA precursor.. Its function is as follows. RNaseP catalyzes the removal of the 5'-leader sequence from pre-tRNA to produce the mature 5'-terminus. It can also cleave other RNA substrates such as 4.5S RNA. The protein component plays an auxiliary but essential role in vivo by binding to the 5'-leader sequence and broadening the substrate specificity of the ribozyme. This Citrobacter koseri (strain ATCC BAA-895 / CDC 4225-83 / SGSC4696) protein is Ribonuclease P protein component.